The primary structure comprises 202 residues: Imidazoleglycerol-phosphate dehydratase (202 aa).

This sequence belongs to the imidazoleglycerol-phosphate dehydratase family.

The protein resides in the cytoplasm. It catalyses the reaction D-erythro-1-(imidazol-4-yl)glycerol 3-phosphate = 3-(imidazol-4-yl)-2-oxopropyl phosphate + H2O. The protein operates within amino-acid biosynthesis; L-histidine biosynthesis; L-histidine from 5-phospho-alpha-D-ribose 1-diphosphate: step 6/9. This is Imidazoleglycerol-phosphate dehydratase from Acinetobacter baylyi (strain ATCC 33305 / BD413 / ADP1).